The chain runs to 172 residues: Zinc finger protein 580 (172 aa).

A disordered region spans residues 1–92 (MLLLPPRPPH…PGEPGPRKGY (92 aa)). A compositionally biased stretch (pro residues) spans 19 to 30 (MDPPPPKTPPFP). A Glycyl lysine isopeptide (Lys-Gly) (interchain with G-Cter in SUMO2) cross-link involves residue K31. A C2H2-type 1 zinc finger spans residues 92 to 114 (YSCPECARVFASPLRLQSHRVSH). A Glycyl lysine isopeptide (Lys-Gly) (interchain with G-Cter in SUMO2) cross-link involves residue K118. 2 consecutive C2H2-type zinc fingers follow at residues 120–142 (FTCG…RATH) and 150–172 (HTCP…VRLH).

Interacts with SMAD2.

Its subcellular location is the nucleus. In terms of biological role, involved in the regulation of endothelial cell proliferation and migration. Mediates H(2)O(2)-induced leukocyte chemotaxis by elevating interleukin-8 production and may play a role in inflammation. May be involved in transcriptional regulation. The polypeptide is Zinc finger protein 580 (Znf580) (Mus musculus (Mouse)).